The following is a 515-amino-acid chain: MRRSTLYSLIFIIILTAFAVWVDLPGSRNVFGRQAEVVEGLDLQGGLQVLLQARHVGGKAPTREQMEEVRQVVEQRVNSLGLTEPVVQLQGSDRIVVELPGVKDPEQAIRTFQGTGLLEFIDAGDTPLQVGTLVNTTLGPAITNGNQNQNSTKNGTPTPGTTPTPESTPQANQTPVAANVTPTPEDPQFQQALQATPPEQLQRTYTTVITGNDIANARPDFDPTTGEPVVSFELKPEAAKKFADFTTQNVGKYLAIALDKKIISSPQIRDPITNGRGVITGVTREEARTLAIQIRSGSLSVPLDIISSNTVGATLGNDSVQRSIRAGLIGIGAVALFMILYYRLPGFVSVVALAIYAAVVFALFKLIPVTLTLAGIAGFILSVGMAVDANVLIFARLKDELRRGRGLIQAIDVGFKNAWPSIRDSNISTLITCAILIWFGSRFGASVIKGFAITLAIGVIVSMFTAIFVTRTLLQVVLSMVHTRNLWIWGIGKNQLPEPEGRTLQPAKSSRTTQA.

Residues 6-26 form a helical membrane-spanning segment; the sequence is LYSLIFIIILTAFAVWVDLPG. The interval 141 to 186 is disordered; sequence AITNGNQNQNSTKNGTPTPGTTPTPESTPQANQTPVAANVTPTPED. Residues 150–169 show a composition bias toward low complexity; it reads NSTKNGTPTPGTTPTPESTP. Positions 170-186 are enriched in polar residues; the sequence is QANQTPVAANVTPTPED. A run of 5 helical transmembrane segments spans residues 322 to 342, 344 to 364, 367 to 387, 427 to 447, and 450 to 470; these read RSIR…ILYY, LPGF…FALF, IPVT…GMAV, ISTL…GASV, and GFAI…IFVT.

This sequence belongs to the SecD/SecF family. SecD subfamily. As to quaternary structure, forms a complex with SecF. Part of the essential Sec protein translocation apparatus which comprises SecA, SecYEG and auxiliary proteins SecDF. Other proteins may also be involved.

It is found in the cell membrane. Part of the Sec protein translocase complex. Interacts with the SecYEG preprotein conducting channel. SecDF uses the proton motive force (PMF) to complete protein translocation after the ATP-dependent function of SecA. The protein is Protein translocase subunit SecD of Thermobaculum terrenum (strain ATCC BAA-798 / CCMEE 7001 / YNP1).